The following is a 414-amino-acid chain: Sex comb on midleg-like protein 4 (414 aa).

Serine 55 and serine 65 each carry phosphoserine. Positions 257 to 276 (HRGSLHPSSSLYCKRQNSGD) are enriched in polar residues. Residues 257–343 (HRGSLHPSSS…DARRPRSRNP (87 aa)) form a disordered region. Residues 284–304 (AATAGGPRTSPMSSGGPSAPG) are compositionally biased toward low complexity. The SAM domain maps to 288 to 354 (GGPRTSPMSS…AWTVEDVVWF (67 aa)). Polar residues predominate over residues 312–332 (PKRNTTSLEGNRCASSPSQDA).

This sequence belongs to the SCM family.

The protein localises to the nucleus. In terms of biological role, putative Polycomb group (PcG) protein. PcG proteins act by forming multiprotein complexes, which are required to maintain the transcriptionally repressive state of homeotic genes throughout development. This is Sex comb on midleg-like protein 4 (SCML4) from Homo sapiens (Human).